A 199-amino-acid polypeptide reads, in one-letter code: Cilia- and flagella-associated protein 20 (199 aa).

The protein belongs to the CFAP20 family. As to expression, expressed in spermatocytes and chordotonal organs in sensory neurons of the antenna.

Its subcellular location is the nucleus. The protein resides in the nucleolus. It localises to the cell projection. The protein localises to the cilium. It is found in the cytoplasm. Its subcellular location is the cytoskeleton. The protein resides in the microtubule organizing center. It localises to the centrosome. The protein localises to the centriole. It is found in the flagellum. Its subcellular location is the cilium axoneme. Cilium- and flagellum-specific protein that plays a role in axonemal structure organization and motility. Microtubule inner protein (MIP) part of the dynein-decorated doublet microtubules (DMTs) in cilia axoneme, which is required for motile cilia beating. Involved in the regulation of the size and morphology of cilia. Required for sperm individualization, differentiation of the sperm flagellum and tubulin polyglycylation of axonemal microtubules. The protein is Cilia- and flagella-associated protein 20 of Drosophila melanogaster (Fruit fly).